The following is an 826-amino-acid chain: Outer membrane usher protein YehB (826 aa).

The first 22 residues, 1–22, serve as a signal peptide directing secretion; that stretch reads MLRMTPLASAIVALLLGIEAYA. A disulfide bond links Cys809 and Cys825.

The protein belongs to the fimbrial export usher family.

The protein resides in the cell outer membrane. In terms of biological role, part of the yehABCD fimbrial operon. Could contribute to adhesion to various surfaces in specific environmental niches. Probably involved in the export and assembly of fimbrial subunits across the outer membrane. The polypeptide is Outer membrane usher protein YehB (yehB) (Escherichia coli (strain K12)).